The following is a 287-amino-acid chain: Pyridoxal kinase PdxY (287 aa).

Substrate is bound by residues S10 and 45-46; that span reads TQ. ATP contacts are provided by residues D112, A144, E149, K182, and 209–212; that span reads RPLV. Residue D224 participates in substrate binding.

Belongs to the pyridoxine kinase family. PdxY subfamily. As to quaternary structure, homodimer. The cofactor is Mg(2+).

The catalysed reaction is pyridoxal + ATP = pyridoxal 5'-phosphate + ADP + H(+). It functions in the pathway cofactor metabolism; pyridoxal 5'-phosphate salvage; pyridoxal 5'-phosphate from pyridoxal: step 1/1. Functionally, pyridoxal kinase involved in the salvage pathway of pyridoxal 5'-phosphate (PLP). Catalyzes the phosphorylation of pyridoxal to PLP. This Escherichia coli O6:H1 (strain CFT073 / ATCC 700928 / UPEC) protein is Pyridoxal kinase PdxY.